A 396-amino-acid chain; its full sequence is Mevalonate kinase (396 aa).

Residues Lys13, Asn55, Ser135, and 140-146 (GAGLGSS) each bind ATP. Ser146 (proton donor) is an active-site residue. Mg(2+) contacts are provided by Ser146 and Glu193. Asp204 (proton acceptor) is an active-site residue.

The protein belongs to the GHMP kinase family. Mevalonate kinase subfamily. Homodimer. Requires Mg(2+) as cofactor.

It is found in the cytoplasm. It localises to the peroxisome. It carries out the reaction (R)-mevalonate + ATP = (R)-5-phosphomevalonate + ADP + H(+). The protein operates within isoprenoid biosynthesis; isopentenyl diphosphate biosynthesis via mevalonate pathway; isopentenyl diphosphate from (R)-mevalonate: step 1/3. Farnesyl pyrophosphate and geranyl pyrophosphate inhibit mevalonate kinase activity by binding competitively at the ATP-binding sites. In terms of biological role, catalyzes the phosphorylation of mevalonate to mevalonate 5-phosphate, a key step in isoprenoid and cholesterol biosynthesis. This is Mevalonate kinase from Homo sapiens (Human).